The chain runs to 212 residues: Adenylate kinase (212 aa).

14-19 (GSGKGT) lines the ATP pocket. The tract at residues 34-63 (STGDLFRKKISEDSQFAAQIQNYLSSGSYV) is NMP. Residues threonine 35, arginine 40, 61 to 63 (SYV), 89 to 92 (GYPR), and glutamine 96 each bind AMP. Positions 126-163 (QRLFCQKCQKSYNLLLAKPKNGLKCDLDNTDLITRNDD) are LID. Arginine 127 serves as a coordination point for ATP. Residues cysteine 130 and cysteine 133 each contribute to the Zn(2+) site. 136–137 (SY) contacts ATP. Residues cysteine 150 and aspartate 153 each contribute to the Zn(2+) site. AMP is bound by residues arginine 160 and arginine 171. ATP is bound at residue glutamine 199.

This sequence belongs to the adenylate kinase family. As to quaternary structure, monomer.

The protein localises to the cytoplasm. It carries out the reaction AMP + ATP = 2 ADP. It functions in the pathway purine metabolism; AMP biosynthesis via salvage pathway; AMP from ADP: step 1/1. Functionally, catalyzes the reversible transfer of the terminal phosphate group between ATP and AMP. Plays an important role in cellular energy homeostasis and in adenine nucleotide metabolism. The polypeptide is Adenylate kinase (Mesomycoplasma hyopneumoniae (strain 7448) (Mycoplasma hyopneumoniae)).